Consider the following 392-residue polypeptide: NAC domain-containing protein 58 (392 aa).

The 165-residue stretch at 9-173 folds into the NAC domain; the sequence is LPPGFRFHPT…DWVLCRIYKK (165 aa). The tract at residues 317 to 345 is disordered; sequence STSAGAVVEPPAVTGKRKRSSDGGEPTIQ.

Expressed in leaves, nodes, internodes and mature seeds. Highly expressed in roots. Expressed in leaf sheaths, flag leaves and inflorescences. Expressed in primary and lateral roots, particularly in the vascular tissues. Expressed in the primary phloem of the culm and leaf sheaths. Expressed principally in the primary phloem and in the peripheral zone of the leaf vascular bundles. Expressed in the floral tissues.

The protein localises to the nucleus. Functionally, transcription factor that acts as a positive regulator of the jasmonate (JA) pathway to mediate leaf senescence. May directly regulate LOX2, AOC, AOS2, AOC1 and OPR7, which are genes involved in the biosynthesis of JA. Regulates positively leaf senescence by directly targeting senescence-associated genes (SAGs) related to chlorophyll degradation, nutrient transport and other genes associated with abscisic acid-induced leaf senescence. Transcription activator that plays a role in mediating abiotic stress responses through the abscisic acid (ABA) pathway. Possesses transcriptional activator activity in yeast. This chain is NAC domain-containing protein 58, found in Oryza sativa subsp. japonica (Rice).